A 139-amino-acid polypeptide reads, in one-letter code: Invertebrate-type lysozyme 3 (139 aa).

The N-terminal stretch at 1 to 18 (MFVKSLVFLTIAVAYASA) is a signal peptide. The 120-residue stretch at 19 to 138 (DCLHCICMRE…WNGIKSCCGC (120 aa)) folds into the I-type lysozyme domain. 7 disulfide bridges follow: Cys20–Cys106, Cys23–Cys138, Cys25–Cys31, Cys36–Cys45, Cys58–Cys86, Cys76–Cys82, and Cys98–Cys120. The active-site Proton donor is Glu28. Asp39 serves as the catalytic Nucleophile. Residue 51–57 (KLPYYED) participates in substrate binding. Residues Tyr90 and 113–115 (HNG) each bind substrate.

It belongs to the glycosyl hydrolase 22 family. Type-I lysozyme subfamily. Expressed in pharynx grinder muscle pm7, isthmus marginal cell mc2 and pharyngeal muscle cell pm5, intestinal cells and at lower levels in coelomocytes and epidermis. Expressed at low levels in intestine.

It is found in the late endosome lumen. The protein localises to the recycling endosome lumen. It localises to the lysosome lumen. Its subcellular location is the secreted. The catalysed reaction is Hydrolysis of (1-&gt;4)-beta-linkages between N-acetylmuramic acid and N-acetyl-D-glucosamine residues in a peptidoglycan and between N-acetyl-D-glucosamine residues in chitodextrins.. Functionally, has bacteriolytic activity against Gram-positive bacteria. Plays a role in defense against bacterial pathogens. Involved in pharyngeal grinder function by enabling proper lysis of ingested bacteria. The sequence is that of Invertebrate-type lysozyme 3 from Caenorhabditis elegans.